A 754-amino-acid chain; its full sequence is Endothelin-converting enzyme 1 (754 aa).

Topologically, residues 1–52 (MMSTYKRATLDEEDLVDSLSESDVYPNHLQVNFRGPRNGQRCWAARTPVEKR) are cytoplasmic. T9 carries the phosphothreonine modification. The helical; Signal-anchor for type II membrane protein transmembrane segment at 53 to 73 (LVVLVALLAAALVACLAVLGI) threads the bilayer. Residues 74 to 754 (QYQTRTPSVC…MNPHHKCEVW (681 aa)) lie on the Extracellular side of the membrane. A Peptidase M13 domain is found at 82 to 754 (VCLSEACISV…MNPHHKCEVW (673 aa)). Cystine bridges form between C83/C88, C106/C739, C114/C699, C169/C419, and C628/C751. N-linked (GlcNAc...) asparagine glycosylation is found at N150, N171, N194, N254, N300, N346, N367, and N523. Residue H591 participates in Zn(2+) binding. Residue E592 is part of the active site. H595 contributes to the Zn(2+) binding site. N616 and N635 each carry an N-linked (GlcNAc...) asparagine glycan. E651 is a binding site for Zn(2+). Catalysis depends on D655, which acts as the Proton donor.

The protein belongs to the peptidase M13 family. As to quaternary structure, homodimer; disulfide-linked. Interacts with PPP1R16B. Interacts with TSPAN8; this interaction recruits the endothelin converting enzyme ECE1 to tetraspanin-enriched microdomains and positively modulates its enzymatic activity. The cofactor is Zn(2+).

The protein resides in the cell membrane. The catalysed reaction is Hydrolysis of the 21-Trp-|-Val-22 bond in big endothelin to form endothelin 1.. Its activity is regulated as follows. Inhibited by phosphoramidon. Converts big endothelin-1 to endothelin-1. This Bos taurus (Bovine) protein is Endothelin-converting enzyme 1 (ECE1).